The chain runs to 454 residues: Aquaglyceroporin-9 (454 aa).

Residues 1–186 (MEGGLRSPLN…RHTMREPFSE (186 aa)) lie on the Cytoplasmic side of the membrane. A helical membrane pass occupies residues 187–207 (FFGVFILILFGDGVVAQVVLS). Residues 208–216 (SGERGSYQS) lie on the Extracellular side of the membrane. A helical transmembrane segment spans residues 217–237 (ISWGWGIGVMLGVYASGVSGA). At 238-257 (HINPAVTFANCIFRKFPWRK) the chain is on the cytoplasmic side. Positions 240-242 (NPA) match the NPA 1 motif. A helical transmembrane segment spans residues 258–278 (FPIYMLAQVLGAMCASGVVYA). The Extracellular segment spans residues 279–316 (NYKSAIDMFEGGNNIRTVGLNTSSAGIFCTYPAPFMTK). A glycan (N-linked (GlcNAc...) asparagine) is linked at N299. A helical membrane pass occupies residues 317-337 (TGQFFSEFVASTILMFCIYAL). Over 338–351 (QDNGNLGSGNLTPL) the chain is Cytoplasmic. A helical transmembrane segment spans residues 352 to 372 (GLFFVIFGIGACFGWETGYAI). Positions 373–375 (NLA) match the NPA 2 motif. The Extracellular portion of the chain corresponds to 373-403 (NLARDFGPRLMSYFLGYGHEVWSAGNYYFWV). Residues 404–424 (PMVAPFIGCLFGGWLYDVFIF) form a helical membrane-spanning segment. Residues 425–454 (TGESPINTPWMGLKRLMPGGLGSKKVDSKV) lie on the Cytoplasmic side of the membrane.

It belongs to the MIP/aquaporin (TC 1.A.8) family.

It is found in the membrane. The catalysed reaction is H2O(in) = H2O(out). It catalyses the reaction glycerol(in) = glycerol(out). Water channel required to facilitate the transport of water across membranes. May play a role in the vegetative growth and pathogenicity. This is Aquaglyceroporin-9 from Botryotinia fuckeliana (strain B05.10) (Noble rot fungus).